We begin with the raw amino-acid sequence, 102 residues long: Small ribosomal subunit protein uS10 (102 aa).

The tract at residues 30-58 (TGVNLSGPIPLPTKTLEIPTRKSPDGEGT) is disordered.

The protein belongs to the universal ribosomal protein uS10 family. Part of the 30S ribosomal subunit.

Its function is as follows. Involved in the binding of tRNA to the ribosomes. This chain is Small ribosomal subunit protein uS10, found in Haloquadratum walsbyi (strain DSM 16790 / HBSQ001).